Reading from the N-terminus, the 218-residue chain is MPDITAKLVKELRDKTGAGMMDCKKALVESDADMEKAVEWLRQKGISSAEKKSGRVAAEGAIGSYIHTGSRVGVLLELNCETDFVARGELFQGLLRDISMQIAACPNVEFVAVDDIPVEVSDKEKSIEMGRDDLSGKPDQIKEKIVAGRISKRLKELALIEQPFIRDTSITVEQLVKQVAGQIGENLRIRRFTRYTLGEGIETDQSDFAAEVASISSK.

The tract at residues 82 to 85 is involved in Mg(2+) ion dislocation from EF-Tu; it reads TDFV.

This sequence belongs to the EF-Ts family.

It localises to the cytoplasm. In terms of biological role, associates with the EF-Tu.GDP complex and induces the exchange of GDP to GTP. It remains bound to the aminoacyl-tRNA.EF-Tu.GTP complex up to the GTP hydrolysis stage on the ribosome. This Prochlorococcus marinus (strain MIT 9211) protein is Elongation factor Ts.